The sequence spans 451 residues: Tubulin alpha chain (451 aa).

Q11 contacts GTP. The residue at position 40 (K40) is an N6-acetyllysine. 6 residues coordinate GTP: E71, G144, T145, T179, N206, and N228. Mg(2+) is bound at residue E71. E254 is a catalytic residue.

This sequence belongs to the tubulin family. As to quaternary structure, dimer of alpha and beta chains. A typical microtubule is a hollow water-filled tube with an outer diameter of 25 nm and an inner diameter of 15 nM. Alpha-beta heterodimers associate head-to-tail to form protofilaments running lengthwise along the microtubule wall with the beta-tubulin subunit facing the microtubule plus end conferring a structural polarity. Microtubules usually have 13 protofilaments but different protofilament numbers can be found in some organisms and specialized cells. Requires Mg(2+) as cofactor. In terms of processing, undergoes a tyrosination/detyrosination cycle, the cyclic removal and re-addition of a C-terminal tyrosine residue by the enzymes tubulin tyrosine carboxypeptidase (TTCP) and tubulin tyrosine ligase (TTL), respectively. Acetylation of alpha chains at Lys-40 stabilizes microtubules and affects affinity and processivity of microtubule motors. This modification has a role in multiple cellular functions, ranging from cell motility, cell cycle progression or cell differentiation to intracellular trafficking and signaling.

The protein resides in the cytoplasm. Its subcellular location is the cytoskeleton. It catalyses the reaction GTP + H2O = GDP + phosphate + H(+). Tubulin is the major constituent of microtubules, a cylinder consisting of laterally associated linear protofilaments composed of alpha- and beta-tubulin heterodimers. Microtubules grow by the addition of GTP-tubulin dimers to the microtubule end, where a stabilizing cap forms. Below the cap, tubulin dimers are in GDP-bound state, owing to GTPase activity of alpha-tubulin. The protein is Tubulin alpha chain (TUBA) of Euglena gracilis.